The following is a 780-amino-acid chain: ATP-dependent 6-phosphofructokinase, liver type (780 aa).

A2 is subject to N-acetylalanine. Residues 2-390 (AAVDLEKLRA…NWNIYKLLAH (389 aa)) form an N-terminal catalytic PFK domain 1 region. ATP is bound by residues G25, 88–89 (RC), and 118–121 (GDGS). D119 is a binding site for Mg(2+). Residues 164–166 (SID), R201, 208–210 (MGR), E264, R292, and 298–301 (HVQR) contribute to the substrate site. D166 functions as the Proton acceptor in the catalytic mechanism. The residue at position 377 (S377) is a Phosphoserine. Residues 391–400 (QKPPKEKSNF) are interdomain linker. The tract at residues 401–780 (SLAILNVGAP…RRTLSMDKGF (380 aa)) is C-terminal regulatory PFK domain 2. Beta-D-fructose 2,6-bisphosphate is bound by residues R470, 527–531 (TISNN), R565, 572–574 (MGG), and E628. S529 carries an O-linked (GlcNAc) serine glycan. Y640 is subject to Phosphotyrosine. Beta-D-fructose 2,6-bisphosphate is bound by residues R654, 660-663 (HLQQ), and R734. S775 carries the post-translational modification Phosphoserine.

The protein belongs to the phosphofructokinase type A (PFKA) family. ATP-dependent PFK group I subfamily. Eukaryotic two domain clade 'E' sub-subfamily. As to quaternary structure, homo- and heterotetramers. Phosphofructokinase (PFK) enzyme functions as a tetramer composed of different combinations of 3 types of subunits, called PFKM (M), PFKL (L) and PFKP (P). The composition of the PFK tetramer differs according to the tissue type it is present in. The kinetic and regulatory properties of the tetrameric enzyme are dependent on the subunit composition, hence can vary across tissues. The cofactor is Mg(2+). Post-translationally, glcNAcylation at Ser-529 by OGT decreases enzyme activity, leading to redirect glucose flux through the oxidative pentose phosphate pathway. Glycosylation is stimulated by both hypoxia and glucose deprivation.

The protein resides in the cytoplasm. The catalysed reaction is beta-D-fructose 6-phosphate + ATP = beta-D-fructose 1,6-bisphosphate + ADP + H(+). It functions in the pathway carbohydrate degradation; glycolysis; D-glyceraldehyde 3-phosphate and glycerone phosphate from D-glucose: step 3/4. Its activity is regulated as follows. Allosterically activated by ADP, AMP, or fructose 2,6-bisphosphate, and allosterically inhibited by ATP or citrate. GlcNAcylation by OGT overcomes allosteric regulation. Its function is as follows. Catalyzes the phosphorylation of D-fructose 6-phosphate to fructose 1,6-bisphosphate by ATP, the first committing step of glycolysis. Negatively regulates the phagocyte oxidative burst in response to bacterial infection by controlling cellular NADPH biosynthesis and NADPH oxidase-derived reactive oxygen species. Upon macrophage activation, drives the metabolic switch toward glycolysis, thus preventing glucose turnover that produces NADPH via pentose phosphate pathway. This is ATP-dependent 6-phosphofructokinase, liver type (PFKL) from Pongo abelii (Sumatran orangutan).